Here is a 328-residue protein sequence, read N- to C-terminus: Methionyl-tRNA formyltransferase (328 aa).

A (6S)-5,6,7,8-tetrahydrofolate-binding site is contributed by 110 to 113 (SLLP).

This sequence belongs to the Fmt family.

The enzyme catalyses L-methionyl-tRNA(fMet) + (6R)-10-formyltetrahydrofolate = N-formyl-L-methionyl-tRNA(fMet) + (6S)-5,6,7,8-tetrahydrofolate + H(+). In terms of biological role, attaches a formyl group to the free amino group of methionyl-tRNA(fMet). The formyl group appears to play a dual role in the initiator identity of N-formylmethionyl-tRNA by promoting its recognition by IF2 and preventing the misappropriation of this tRNA by the elongation apparatus. The protein is Methionyl-tRNA formyltransferase of Prochlorococcus marinus (strain MIT 9515).